We begin with the raw amino-acid sequence, 321 residues long: Serine/threonine-protein phosphatase 4 catalytic subunit 2 (321 aa).

Asp-64, His-66, Asp-92, and Asn-124 together coordinate Mn(2+). The Proton donor role is filled by His-125. Residues His-174 and His-249 each coordinate Mn(2+).

Belongs to the PPP phosphatase family. PP-4 (PP-X) subfamily. Serine/threonine-protein phosphatase 4 (PP4) occurs in different assemblies of the catalytic and one or more regulatory subunits. Requires Mn(2+) as cofactor.

It catalyses the reaction O-phospho-L-seryl-[protein] + H2O = L-seryl-[protein] + phosphate. The catalysed reaction is O-phospho-L-threonyl-[protein] + H2O = L-threonyl-[protein] + phosphate. Functionally, protein phosphatase which seems to be involved in larval development but not essential for embryogenesis. This chain is Serine/threonine-protein phosphatase 4 catalytic subunit 2, found in Caenorhabditis elegans.